The chain runs to 895 residues: Androgen receptor (895 aa).

The modulating stretch occupies residues 1-533 (MEVQLGLGRV…PIDYYFPPQK (533 aa)). Residues 1–562 (MEVQLGLGRV…GSCKVFFKRA (562 aa)) are interaction with ZNF318. 2 disordered regions span residues 33–155 (VIQN…PTFP) and 175–211 (QLLQ…YLGG). Composition is skewed to low complexity over residues 44 to 81 (AASA…GSPQ) and 175 to 200 (QLLQ…ASGA). S66 is modified (phosphoserine; by CDK9). S79 bears the Phosphoserine mark. The span at 201 to 211 (PTSSKDNYLGG) shows a compositional bias: polar residues. Y208 is subject to Phosphotyrosine; by CSK. S241 carries the post-translational modification Phosphoserine. Y252 is subject to Phosphotyrosine; by CSK and TNK2. Phosphotyrosine; by CSK occurs at positions 292, 331, 342, and 347. Residue Y348 is modified to Phosphotyrosine; by CSK and TNK2. A Glycyl lysine isopeptide (Lys-Gly) (interchain with G-Cter in SUMO) cross-link involves residue K371. Y378 is subject to Phosphotyrosine; by CSK. Residue K496 forms a Glycyl lysine isopeptide (Lys-Gly) (interchain with G-Cter in SUMO) linkage. 2 positions are modified to phosphotyrosine; by CSK: Y510 and Y527. The segment at 527-894 (YYFPPQKTCL…GKVKPIYFHT (368 aa)) is interaction with LPXN. The segment at residues 534–607 (TCLICGDEAS…AGMTLGARKL (74 aa)) is a DNA-binding region (nuclear receptor). NR C4-type zinc fingers lie at residues 535–555 (CLIC…CGSC) and 571–595 (CASR…LRKC). Positions 547-637 (YGALTCGSCK…TEETAQKLTV (91 aa)) are interaction with HIPK3. Residues 567-894 (QKYLCASRND…GKVKPIYFHT (328 aa)) are interaction with CCAR1. The tract at residues 600 to 894 (MTLGARKLKK…GKVKPIYFHT (295 aa)) is interaction with KAT7. S626 carries the phosphoserine; by STK4/MST1 modification. Residues 644–875 (ECQPIFLNVL…DFPEMMAEII (232 aa)) form the NR LBD domain. N681 and R728 together coordinate 17beta-hydroxy-5alpha-androstan-3-one. Residues K821 and K823 each participate in a glycyl lysine isopeptide (Lys-Gly) (interchain with G-Cter in ubiquitin) cross-link. T853 provides a ligand contact to 17beta-hydroxy-5alpha-androstan-3-one. Y891 is modified (phosphotyrosine; by CSK).

Belongs to the nuclear hormone receptor family. NR3 subfamily. In terms of assembly, binds DNA as a homodimer. Part of a ternary complex containing AR, EFCAB6/DJBP and PARK7. Interacts with HIPK3 and NR0B2 in the presence of androgen. The ligand binding domain interacts with KAT7/HBO1 in the presence of dihydrotestosterone. Interacts with EFCAB6/DJBP, PQBP1, RANBP9, RBAK, SPDEF, SRA1, TGFB1I1 and RREB1. Interacts with ZMIZ1/ZIMP10 and ZMIZ2/ZMIP7 which both enhance its transactivation activity. Interacts with SLC30A9 and RAD54L2/ARIP4. Interacts with MACROD1 (via macro domain). Interacts via the ligand-binding domain with LXXLL and FXXLF motifs from NCOA1, NCOA2, NCOA3 and MAGEA11. Interacts (via nuclear receptor DNA binding domain and nuclear receptor ligand binding domain) with NCOA4. The AR N-terminal poly-Gln region binds Ran resulting in enhancement of AR-mediated transactivation. Ran-binding decreases as the poly-Gln length increases. Interacts with HIP1 (via coiled coil domain). Interacts (via ligand-binding domain) with TRIM68. Interacts with TNK2. Interacts with USP26. Interacts with RNF6. Interacts (regulated by RNF6 probably through polyubiquitination) with RNF14; regulates AR transcriptional activity. Interacts with PRMT2 and TRIM24. Interacts with RACK1. Interacts with RANBP10; this interaction enhances dihydrotestosterone-induced AR transcriptional activity. Interacts with PRPF6 in a hormone-independent way; this interaction enhances dihydrotestosterone-induced AR transcriptional activity. Interacts with STK4/MST1. Interacts with ZIPK/DAPK3. Interacts with LPXN. Interacts with MAK. Part of a complex containing AR, MAK and NCOA3. Interacts with CRY1. Interacts with CCAR1 and GATA2. Interacts with ZNF318. Interacts with BUD31. Interacts with ARID4A. Interacts with ARID4B. Interacts (via NR LBD domain) with ZBTB7A; the interaction is direct and androgen-dependent. Interacts with NCOR1. Interacts with NCOR2. Interacts with CRY2 in a ligand-dependent manner. In terms of processing, phosphorylated in prostate cancer cells in response to several growth factors including EGF. Phosphorylation is induced by c-Src kinase (CSK). Tyr-510 is one of the major phosphorylation sites and an increase in phosphorylation and Src kinase activity is associated with prostate cancer progression. Phosphorylation by TNK2 enhances the DNA-binding and transcriptional activity. Phosphorylation at Ser-66 by CDK9 regulates AR promoter selectivity and cell growth. Post-translationally, sumoylated on Lys-371 (major) and Lys-496. Ubiquitinated. Deubiquitinated by USP26. 'Lys-6' and 'Lys-27'-linked polyubiquitination by RNF6 modulates AR transcriptional activity and specificity. Palmitoylated by ZDHHC7 and ZDHHC21. Palmitoylation is required for plasma membrane targeting and for rapid intracellular signaling via ERK and AKT kinases and cAMP generation.

Its subcellular location is the nucleus. The protein resides in the cytoplasm. Steroid hormone receptors are ligand-activated transcription factors that regulate eukaryotic gene expression and affect cellular proliferation and differentiation in target tissues. Transcription factor activity is modulated by bound coactivator and corepressor proteins like ZBTB7A that recruits NCOR1 and NCOR2 to the androgen response elements/ARE on target genes, negatively regulating androgen receptor signaling and androgen-induced cell proliferation. Transcription activation is also down-regulated by NR0B2. Activated, but not phosphorylated, by HIPK3 and ZIPK/DAPK3. The sequence is that of Androgen receptor (AR) from Papio hamadryas (Hamadryas baboon).